A 391-amino-acid chain; its full sequence is MRKMLATVLSQVFSGMVQKPALRGLLSSLKFSNDATCDIKKCDLYLLEQGPPTSTVLTREEALKYYRNMQVIRRMELKADQLYKQKFIRGFCHLCDGQEACNVGLEAGINPTDHIITSYRAHGLCYTRGLSVKSILAELTGRKGGCAKGKGGSMHMYAKNFYGGNGIVGAQVPLGAGVALACKYLKNGQICLALYGDGAANQGQVFEAYNMSALWKLPCVFICENNRYGMGTAIERSAASTDYHKKGFVIPGLRVNGMDILSVREATKFAADHCRSGKGPIVMELQTYRYHGHSMSDPGISYRTREEVQNVRSKSDPIMLLRERMISNNLSSVEELKEIDADVKKEVEEAAQFATTDPEPPLEDLANYLYHQNPPFEVRGAHKWLKFKSVS.

A mitochondrion-targeting transit peptide spans 1-30 (MRKMLATVLSQVFSGMVQKPALRGLLSSLK). His93, Tyr119, Arg120, Ala158, Gly166, Val168, Asp197, Gly198, Ala199, Asn226, and Tyr228 together coordinate pyruvate. Positions 119 and 120 each coordinate thiamine diphosphate. Residues Gly166, Val168, Asp197, Gly198, Ala199, and Asn226 each contribute to the thiamine diphosphate site. Asp197 is a binding site for Mg(2+). Residues Asn226 and Tyr228 each contribute to the Mg(2+) site. Residue His293 coordinates thiamine diphosphate. Ser294 and Ser296 each carry phosphoserine. Ser301 bears the Phosphoserine; by PDK3 mark.

Heterotetramer of two PDHA2 and two PDHB subunits. The heterotetramer interacts with DLAT, and is part of the multimeric pyruvate dehydrogenase complex that contains multiple copies of pyruvate dehydrogenase (E1), dihydrolipoamide acetyltransferase (DLAT, E2) and lipoamide dehydrogenase (DLD, E3). These subunits are bound to an inner core composed of about 48 DLAT and 12 PDHX molecules. It depends on thiamine diphosphate as a cofactor. Requires Mg(2+) as cofactor. Testis.

It localises to the mitochondrion matrix. The catalysed reaction is N(6)-[(R)-lipoyl]-L-lysyl-[protein] + pyruvate + H(+) = N(6)-[(R)-S(8)-acetyldihydrolipoyl]-L-lysyl-[protein] + CO2. Pyruvate dehydrogenase activity is inhibited by phosphorylation of PDHA2; it is reactivated by dephosphorylation. Functionally, the pyruvate dehydrogenase complex catalyzes the overall conversion of pyruvate to acetyl-CoA and CO(2), and thereby links the glycolytic pathway to the tricarboxylic cycle. This is Pyruvate dehydrogenase E1 component subunit alpha, testis-specific form, mitochondrial (Pdha2) from Rattus norvegicus (Rat).